A 118-amino-acid chain; its full sequence is Na(+)/H(+) antiporter subunit G1 (118 aa).

3 helical membrane passes run 9–29 (LAVI…IGII), 47–67 (LGAI…DGYI), and 69–89 (MQLI…SHLI).

It belongs to the CPA3 antiporters (TC 2.A.63) subunit G family. In terms of assembly, may form a heterooligomeric complex that consists of seven subunits: mnhA1, mnhB1, mnhC1, mnhD1, mnhE1, mnhF1 and mnhG1.

Its subcellular location is the cell membrane. Its function is as follows. Mnh complex is a Na(+)/H(+) antiporter involved in Na(+) excretion. The sequence is that of Na(+)/H(+) antiporter subunit G1 (mnhG1) from Staphylococcus haemolyticus (strain JCSC1435).